We begin with the raw amino-acid sequence, 331 residues long: CRISPR-associated endonuclease Cas1 1 (331 aa).

Mn(2+) is bound by residues Glu-161, His-226, and Glu-241.

The protein belongs to the CRISPR-associated endonuclease Cas1 family. In terms of assembly, homodimer, forms a heterotetramer with a Cas2 homodimer. The cofactor is Mg(2+). It depends on Mn(2+) as a cofactor.

CRISPR (clustered regularly interspaced short palindromic repeat), is an adaptive immune system that provides protection against mobile genetic elements (viruses, transposable elements and conjugative plasmids). CRISPR clusters contain spacers, sequences complementary to antecedent mobile elements, and target invading nucleic acids. CRISPR clusters are transcribed and processed into CRISPR RNA (crRNA). Acts as a dsDNA endonuclease. Involved in the integration of spacer DNA into the CRISPR cassette. The polypeptide is CRISPR-associated endonuclease Cas1 1 (Methanospirillum hungatei JF-1 (strain ATCC 27890 / DSM 864 / NBRC 100397 / JF-1)).